The following is a 199-amino-acid chain: MAQLFFRYGAMSSGKTIEILKVAHNYEAQGRKIALMTSGLDNRSGVGTVASRIGIHRKAIPITEEMDLFEYIKEMNNHDLADGDGKLACVLIDEAQFLKRHHVLECAKIVDEFNIPVMTFGLKNDFQNHLFEGSENLLIFADKIEEMKTICHYCGHKATMNLRINNGKPVYEGEQVQIGGDESYYPVCRYHYFHPNVVR.

Residues 9 to 16 (GAMSSGKT) and 93 to 96 (DEAQ) contribute to the ATP site. Glu-94 functions as the Proton acceptor in the catalytic mechanism. The Zn(2+) site is built by Cys-151, Cys-154, Cys-188, and His-191.

Belongs to the thymidine kinase family. In terms of assembly, homotetramer.

Its subcellular location is the cytoplasm. It catalyses the reaction thymidine + ATP = dTMP + ADP + H(+). This is Thymidine kinase from Lactobacillus acidophilus (strain ATCC 700396 / NCK56 / N2 / NCFM).